Reading from the N-terminus, the 452-residue chain is Na(+)/H(+) antiporter NhaA (452 aa).

A run of 11 helical transmembrane segments spans residues 27 to 47, 67 to 87, 108 to 128, 137 to 157, 166 to 186, 194 to 214, 216 to 236, 314 to 334, 343 to 363, 381 to 401, and 414 to 434; these read FSGIFLFFCAVVAMISANSAL, FIGMSLHHWINDVLMSFFFLM, AFPAIAALGGMIVPAIVYTLF, GFGIPMATDIAFALGVLLLLG, VFLVSLAVVDDLGAVVVIAIF, LWLLYSVVILGLLIGLNKMGV, SLFPYAILGVLLWITVHNCGI, PWSAYFIMPVFAFANAGVAIS, GVLPGIMLGLIVGKPVGILGL, WIDILGAGMLAGIGFTMSIFI, and VAKIAILSASLFAGALGYFFI.

Belongs to the NhaA Na(+)/H(+) (TC 2.A.33) antiporter family.

It localises to the cell inner membrane. The catalysed reaction is Na(+)(in) + 2 H(+)(out) = Na(+)(out) + 2 H(+)(in). Functionally, na(+)/H(+) antiporter that extrudes sodium in exchange for external protons. In Wolinella succinogenes (strain ATCC 29543 / DSM 1740 / CCUG 13145 / JCM 31913 / LMG 7466 / NCTC 11488 / FDC 602W) (Vibrio succinogenes), this protein is Na(+)/H(+) antiporter NhaA.